The chain runs to 208 residues: Regulator of G-protein signaling 4 (208 aa).

S-palmitoyl cysteine attachment occurs at residues Cys-2, Cys-12, and Cys-95. The RGS domain maps to 62-178 (SLENLIHHDR…LKSPYLDLVS (117 aa)).

In terms of processing, palmitoylated on Cys-2 and/or Cys-12. Phosphorylated by cyclic GMP-dependent protein kinase. In terms of tissue distribution, expressed in the developing nervous system.

Inhibits signal transduction by increasing the GTPase activity of G protein alpha subunits thereby driving them into their inactive GDP-bound form. Activity on G(z)-alpha is inhibited by phosphorylation of the G-protein. Activity on G(z)-alpha and G(i)-alpha-1 is inhibited by palmitoylation of the G-protein. This is Regulator of G-protein signaling 4 (RGS4) from Gallus gallus (Chicken).